We begin with the raw amino-acid sequence, 277 residues long: Probable septum site-determining protein MinC (277 aa).

Residues 137–164 (ATTGNAPAEPAPAEPAAPAAAPQPPAVP) are disordered. The segment covering 145–164 (EPAPAEPAAPAAAPQPPAVP) has biased composition (pro residues).

It belongs to the MinC family. In terms of assembly, interacts with MinD and FtsZ.

In terms of biological role, cell division inhibitor that blocks the formation of polar Z ring septums. Rapidly oscillates between the poles of the cell to destabilize FtsZ filaments that have formed before they mature into polar Z rings. Prevents FtsZ polymerization. In Bordetella petrii (strain ATCC BAA-461 / DSM 12804 / CCUG 43448), this protein is Probable septum site-determining protein MinC.